Here is a 509-residue protein sequence, read N- to C-terminus: Ribonuclease Y (509 aa).

A helical membrane pass occupies residues 5-25; that stretch reads IIILLSVFCGIFFICFIICSS. Residues 199–259 enclose the KH domain; sequence TTNIVKLPSD…IRREIATRTL (61 aa). Residues 325-418 enclose the HD domain; sequence VLAHSIEVAK…VAIADSISAS (94 aa).

The protein belongs to the RNase Y family.

Its subcellular location is the cell membrane. In terms of biological role, endoribonuclease that initiates mRNA decay. This is Ribonuclease Y from Mycoplasma mycoides subsp. mycoides SC (strain CCUG 32753 / NCTC 10114 / PG1).